The following is a 350-amino-acid chain: Bifunctional methylenetetrahydrofolate dehydrogenase/cyclohydrolase, mitochondrial (350 aa).

Residues Met1 to Asn35 constitute a mitochondrion transit peptide. Lys50 is modified (N6-acetyllysine; alternate). A Glycyl lysine isopeptide (Lys-Gly) (interchain with G-Cter in SUMO2); alternate cross-link involves residue Lys50. Substrate contacts are provided by residues Tyr84–Lys88 and Val131–Leu133. Residues Gly200 to Ser202 and Arg233 each bind NAD(+). Pro309 to Gly313 serves as a coordination point for substrate.

This sequence belongs to the tetrahydrofolate dehydrogenase/cyclohydrolase family. As to quaternary structure, homodimer. It depends on Mg(2+) as a cofactor.

It is found in the mitochondrion. It carries out the reaction (6R)-5,10-methylene-5,6,7,8-tetrahydrofolate + NAD(+) = (6R)-5,10-methenyltetrahydrofolate + NADH. The catalysed reaction is (6R)-5,10-methenyltetrahydrofolate + H2O = (6R)-10-formyltetrahydrofolate + H(+). Although its dehydrogenase activity is NAD-specific, it can also utilize NADP at a reduced efficiency. In Mus musculus (Mouse), this protein is Bifunctional methylenetetrahydrofolate dehydrogenase/cyclohydrolase, mitochondrial (Mthfd2).